A 182-amino-acid chain; its full sequence is UPF0397 protein BT9727_2423 (182 aa).

5 helical membrane-spanning segments follow: residues 9 to 29 (VVAIGIGSALYGILGLWGFSI), 40 to 60 (AILTVFGALFGPVAGLLIGLI), 71 to 91 (WGIWWGWVISSGIIGFTMGFI), 114 to 134 (ITGLIGIVIAIIFAGAFDIIV), and 142 to 162 (IVIQVLGATIADVIVFLVLGL).

This sequence belongs to the UPF0397 family.

Its subcellular location is the cell membrane. In Bacillus thuringiensis subsp. konkukian (strain 97-27), this protein is UPF0397 protein BT9727_2423.